The chain runs to 178 residues: Transmembrane protein 196 (178 aa).

Helical transmembrane passes span 11–31, 47–67, 73–93, and 106–126; these read LLVLSVLEIGLGVSSVAVGAV, SSPVWSGVCFLLCGICGILCA, LVMILFSACCICGLIGGILNF, and LYPLHLASMSLACIGIGGCTL.

In terms of tissue distribution, expression is significantly decreased in lung cancer cells compared to normal lung tissue (at protein level).

It is found in the cytoplasm. The protein localises to the membrane. In terms of biological role, acts as a tumor suppressor in lung cancer. Inhibits tumor cell growth by inhibiting cell proliferation and migration and promoting cell apoptosis. Inhibits metastasis of lung cancer by suppressing beta-catenin expression in the Wnt/beta-catenin signaling pathway. In Homo sapiens (Human), this protein is Transmembrane protein 196 (TMEM196).